A 391-amino-acid polypeptide reads, in one-letter code: Zinc finger protein 414 (391 aa).

Residues 1–110 (MDEEPSGPSL…RRPPPGKQIP (110 aa)) form a disordered region. Over residues 84-93 (GPTSTVSGTS) the composition is skewed to polar residues. 3 consecutive C2H2-type zinc fingers follow at residues 109 to 133 (IPCS…LRTH), 145 to 169 (FRCS…GKLH), and 176 to 201 (FKCE…CAEH). 3 disordered regions span residues 201-243 (HAQS…LEPF), 274-312 (LAAA…SGHA), and 344-391 (HLED…FSPL). The span at 214–226 (LDRESPASERPPE) shows a compositional bias: basic and acidic residues. The segment covering 227–236 (SDPAPAPGLP) has biased composition (pro residues). Residues 274-286 (LAAAPGPPASSAA) are compositionally biased toward low complexity. The C2H2-type 4 zinc finger occupies 326–348 (YSCMQCAFSTASRPAMTLHLEDH). A compositionally biased stretch (pro residues) spans 353-372 (PAAPAPGQPRPDAPADPAPL).

It belongs to the krueppel C2H2-type zinc-finger protein family.

Its subcellular location is the nucleus. Its function is as follows. May be involved in transcriptional regulation. This Bos taurus (Bovine) protein is Zinc finger protein 414 (ZNF414).